The primary structure comprises 119 residues: Large ribosomal subunit protein uL18 (119 aa).

The protein belongs to the universal ribosomal protein uL18 family. In terms of assembly, part of the 50S ribosomal subunit; part of the 5S rRNA/L5/L18/L25 subcomplex. Contacts the 5S and 23S rRNAs.

Functionally, this is one of the proteins that bind and probably mediate the attachment of the 5S RNA into the large ribosomal subunit, where it forms part of the central protuberance. This Xanthomonas oryzae pv. oryzae (strain MAFF 311018) protein is Large ribosomal subunit protein uL18.